A 118-amino-acid polypeptide reads, in one-letter code: Large ribosomal subunit protein bL20c (118 aa).

The protein belongs to the bacterial ribosomal protein bL20 family.

The protein localises to the plastid. It localises to the chloroplast. Its function is as follows. Binds directly to 23S ribosomal RNA and is necessary for the in vitro assembly process of the 50S ribosomal subunit. It is not involved in the protein synthesizing functions of that subunit. The sequence is that of Large ribosomal subunit protein bL20c from Gracilaria tenuistipitata var. liui (Red alga).